The primary structure comprises 445 residues: MRPNRFSLRRSPTAVAAVALAAVLAAGAPAAQAAGAAAPTAAAAAAPDIPLANVKAHLTQLSTIAANNGGNRAHGRPGYKASVDYVKAKLDAAGYTTTLQQFTSGGATGYNLIADWPGGDPNKVLMAGAHLDSVSSGAGINDNGSGSAAVLETALAVSRAGYQPDKHLRFAWWGAEELGLIGSKYYVNNLPSADRSKLAGYLNFDMIGSPNPGYFVYDDDPVIEKTFKDYFAGLNVPTEIETEGDGRSDHAPFKNVGVPVGGLFTGAGYTKSAAQAQKWGGTAGQAFDRCYHSSCDSLSNINDTALDRNSDAAAHAIWTLSSGTGEPPTGEGVFSNTTDVAIPDAGAAVTSSVAVTGRTGNAPAALQVGVDIKHTYRGDLVVDLLAPDGTAYRLKNSSSGDSADNVIATYTVNASSEVANGSWKLRVQDIARQDTGYIDSWKLTF.

Residues 1–45 (MRPNRFSLRRSPTAVAAVALAAVLAAGAPAAQAAGAAAPTAAAAA) form the signal peptide. Residues Asp-48 and Ile-49 each coordinate Ca(2+). His-130 and Asp-142 together coordinate Zn(2+). Catalysis depends on Glu-176, which acts as the Proton acceptor. Zn(2+) contacts are provided by Glu-177, Asp-205, and His-292. A disulfide bridge links Cys-290 with Cys-295. Residues Asp-307 and Asp-311 each contribute to the Ca(2+) site. One can recognise a P/Homo B domain in the interval 325-445 (GEPPTGEGVF…GYIDSWKLTF (121 aa)). The propeptide at 330 to 445 (GEGVFSNTTD…GYIDSWKLTF (116 aa)) is removed in mature form.

It belongs to the peptidase M28 family. M28A subfamily. As to quaternary structure, monomer. Ca(2+) is required as a cofactor. It depends on Zn(2+) as a cofactor. The cofactor is Mn(2+). Co(2+) serves as cofactor.

The protein resides in the secreted. It carries out the reaction Release of an N-terminal amino acid with a preference for large hydrophobic amino-terminus residues.. Its activity is regulated as follows. Calcium activates the enzyme, inhibited by 1,10-phenanthroline, EDTA and EGTA. End-product inhibited by L-amino acids. Non-competitively inhibited by NaF and NaH(2)PO(4). In terms of biological role, an exopeptidase specific for larger hydrophobic amino acids (especially leucine), no cleavage occurs if the next residue is proline. The protein is Aminopeptidase S of Streptomyces griseus subsp. griseus (strain JCM 4626 / CBS 651.72 / NBRC 13350 / KCC S-0626 / ISP 5235).